The sequence spans 118 residues: Large ribosomal subunit protein bL20 (118 aa).

This sequence belongs to the bacterial ribosomal protein bL20 family.

In terms of biological role, binds directly to 23S ribosomal RNA and is necessary for the in vitro assembly process of the 50S ribosomal subunit. It is not involved in the protein synthesizing functions of that subunit. The sequence is that of Large ribosomal subunit protein bL20 from Pseudomonas entomophila (strain L48).